Consider the following 422-residue polypeptide: Dihydroorotase (422 aa).

Residues His59 and His61 each coordinate Zn(2+). Residues 61–63 (HFR) and Asn93 each bind substrate. The Zn(2+) site is built by Asp150, His177, and His230. Position 276 (Asn276) interacts with substrate. Asp303 contributes to the Zn(2+) binding site. Asp303 is a catalytic residue. His307 provides a ligand contact to substrate.

It belongs to the metallo-dependent hydrolases superfamily. DHOase family. Class I DHOase subfamily. Requires Zn(2+) as cofactor.

It carries out the reaction (S)-dihydroorotate + H2O = N-carbamoyl-L-aspartate + H(+). The protein operates within pyrimidine metabolism; UMP biosynthesis via de novo pathway; (S)-dihydroorotate from bicarbonate: step 3/3. In terms of biological role, catalyzes the reversible cyclization of carbamoyl aspartate to dihydroorotate. This chain is Dihydroorotase, found in Streptococcus pyogenes serotype M3 (strain ATCC BAA-595 / MGAS315).